The following is a 1022-amino-acid chain: Dihydropyrimidine dehydrogenase [NADP(+)] (1022 aa).

The segment at 26 to 45 is disordered; that stretch reads ANVHSTASKKNEKKHWKRNP. The region spanning 69–100 is the 4Fe-4S ferredoxin-type 1 domain; the sequence is ERGALREALRCLKCADAPCQKSCPTNLDIKSF. The [4Fe-4S] cluster site is built by cysteine 79, cysteine 82, cysteine 87, and cysteine 91. Residue valine 129 coordinates FAD. [4Fe-4S] cluster contacts are provided by cysteine 130, cysteine 136, cysteine 140, and glutamine 156. FAD is bound by residues 194-198, 218-226, arginine 235, and leucine 261; these read GCGPA and EKQKYIGGL. NADP(+)-binding positions include 340–343, 364–365, arginine 371, 437–439, and 481–487; these read AGDT, RK, AFG, and DIAGFAN. 480-489 is a binding site for FAD; the sequence is GDIAGFANTT. FMN contacts are provided by residues serine 550 and 574–575; that span reads KT. Substrate-binding positions include asparagine 609 and 668 to 670; that span reads NLS. Catalysis depends on cysteine 671, which acts as the Proton acceptor. Residue lysine 709 participates in FMN binding. Substrate is bound at residue 736 to 737; sequence NT. FMN is bound by residues glycine 767, 793-795, and 816-817; these read TGG and CS. 4Fe-4S ferredoxin-type domains lie at 943 to 975 and 976 to 1006; these read VQALVDPEMCINCGKCYMTCNDSGYQAIKFDPE and THLPVITDSCTGCTLCLSVCPIIDCIKMVSR. The [4Fe-4S] cluster site is built by cysteine 952, cysteine 955, cysteine 958, cysteine 962, cysteine 985, cysteine 988, cysteine 991, and cysteine 995.

The protein belongs to the dihydropyrimidine dehydrogenase family. Homodimer. Requires FAD as cofactor. FMN serves as cofactor. The cofactor is [4Fe-4S] cluster.

Its subcellular location is the cytoplasm. It carries out the reaction 5,6-dihydrouracil + NADP(+) = uracil + NADPH + H(+). It catalyses the reaction 5,6-dihydrothymine + NADP(+) = thymine + NADPH + H(+). The protein operates within amino-acid biosynthesis; beta-alanine biosynthesis. Its function is as follows. Involved in pyrimidine base degradation. Catalyzes the reduction of uracil and thymine. Also involved the degradation of the chemotherapeutic drug 5-fluorouracil. This is Dihydropyrimidine dehydrogenase [NADP(+)] (dpyd) from Danio rerio (Zebrafish).